The chain runs to 118 residues: Fluoride-specific ion channel FluC 1 (118 aa).

Helical transmembrane passes span 1 to 21 and 29 to 49; these read MIQC…RGFV and FNTS…FCIG. Na(+) contacts are provided by Gly-71 and Thr-74. A helical transmembrane segment spans residues 95–115; that stretch reads LFILYSILQYGVSFVACLLGY.

Belongs to the fluoride channel Fluc/FEX (TC 1.A.43) family.

It is found in the cell membrane. The catalysed reaction is fluoride(in) = fluoride(out). Na(+) is not transported, but it plays an essential structural role and its presence is essential for fluoride channel function. Its function is as follows. Fluoride-specific ion channel. Important for reducing fluoride concentration in the cell, thus reducing its toxicity. The sequence is that of Fluoride-specific ion channel FluC 1 from Staphylococcus saprophyticus subsp. saprophyticus (strain ATCC 15305 / DSM 20229 / NCIMB 8711 / NCTC 7292 / S-41).